The primary structure comprises 130 residues: Small ribosomal subunit protein uS9 (130 aa).

It belongs to the universal ribosomal protein uS9 family.

This Acidovorax ebreus (strain TPSY) (Diaphorobacter sp. (strain TPSY)) protein is Small ribosomal subunit protein uS9.